A 635-amino-acid polypeptide reads, in one-letter code: Threonine--tRNA ligase (635 aa).

One can recognise a TGS domain in the interval 1 to 61 (MVSIRLPDGS…DRDASLAIVT (61 aa)). The tract at residues 242-533 (DHRKLGKQLD…LIEHHAGAMP (292 aa)) is catalytic. Residues Cys333, His384, and His510 each coordinate Zn(2+).

It belongs to the class-II aminoacyl-tRNA synthetase family. As to quaternary structure, homodimer. Zn(2+) is required as a cofactor.

The protein localises to the cytoplasm. The catalysed reaction is tRNA(Thr) + L-threonine + ATP = L-threonyl-tRNA(Thr) + AMP + diphosphate + H(+). Functionally, catalyzes the attachment of threonine to tRNA(Thr) in a two-step reaction: L-threonine is first activated by ATP to form Thr-AMP and then transferred to the acceptor end of tRNA(Thr). Also edits incorrectly charged L-seryl-tRNA(Thr). The chain is Threonine--tRNA ligase from Burkholderia pseudomallei (strain 1106a).